The following is a 185-amino-acid chain: Large ribosomal subunit protein bL25 (185 aa).

This sequence belongs to the bacterial ribosomal protein bL25 family. CTC subfamily. In terms of assembly, part of the 50S ribosomal subunit; part of the 5S rRNA/L5/L18/L25 subcomplex. Contacts the 5S rRNA. Binds to the 5S rRNA independently of L5 and L18.

Functionally, this is one of the proteins that binds to the 5S RNA in the ribosome where it forms part of the central protuberance. In Chlamydia pneumoniae (Chlamydophila pneumoniae), this protein is Large ribosomal subunit protein bL25.